The primary structure comprises 488 residues: 3-octaprenyl-4-hydroxybenzoate carboxy-lyase (488 aa).

Asparagine 172 lines the Mn(2+) pocket. Prenylated FMN-binding positions include 175–177, 189–191, and 194–195; these read IYR, RWL, and RG. Mn(2+) is bound at residue glutamate 238. Aspartate 287 acts as the Proton donor in catalysis.

This sequence belongs to the UbiD family. In terms of assembly, homohexamer. The cofactor is prenylated FMN. Mn(2+) is required as a cofactor.

Its subcellular location is the cell membrane. It catalyses the reaction a 4-hydroxy-3-(all-trans-polyprenyl)benzoate + H(+) = a 2-(all-trans-polyprenyl)phenol + CO2. Its pathway is cofactor biosynthesis; ubiquinone biosynthesis. In terms of biological role, catalyzes the decarboxylation of 3-octaprenyl-4-hydroxy benzoate to 2-octaprenylphenol, an intermediate step in ubiquinone biosynthesis. This Pseudomonas syringae pv. syringae (strain B728a) protein is 3-octaprenyl-4-hydroxybenzoate carboxy-lyase.